The chain runs to 218 residues: Adenylate kinase (218 aa).

G10–T15 serves as a coordination point for ATP. The interval S30–V59 is NMP. Residues T31, R36, G57 to V59, G85 to R88, and Q92 each bind AMP. The tract at residues G122 to D159 is LID. ATP-binding positions include R123 and T132–Y133. AMP is bound by residues R156 and R167. G203 lines the ATP pocket.

Belongs to the adenylate kinase family. As to quaternary structure, monomer.

The protein localises to the cytoplasm. The enzyme catalyses AMP + ATP = 2 ADP. It participates in purine metabolism; AMP biosynthesis via salvage pathway; AMP from ADP: step 1/1. Functionally, catalyzes the reversible transfer of the terminal phosphate group between ATP and AMP. Plays an important role in cellular energy homeostasis and in adenine nucleotide metabolism. The sequence is that of Adenylate kinase from Albidiferax ferrireducens (strain ATCC BAA-621 / DSM 15236 / T118) (Rhodoferax ferrireducens).